We begin with the raw amino-acid sequence, 324 residues long: D-erythronate dehydrogenase (324 aa).

Positions 125, 149, and 153 each coordinate NAD(+). The active-site Proton acceptor is the Y149.

Belongs to the NAD(P)-dependent epimerase/dehydratase family.

The enzyme catalyses D-erythronate + NAD(+) = 2-dehydro-D-erythronate + NADH + H(+). Catalyzes oxidation of D-erythronate to 2-oxo-tetronate. Can use either NAD(+) or NADP(+) as cosubstrate, with a preference for NAD(+). The sequence is that of D-erythronate dehydrogenase from Cupriavidus necator (strain ATCC 17699 / DSM 428 / KCTC 22496 / NCIMB 10442 / H16 / Stanier 337) (Ralstonia eutropha).